Consider the following 712-residue polypeptide: MSNQITYFATAARGFEEMLKIELEQICGADGKVVQGGVHFTTNQKGAYQALLHSRLASRILLPLVSTKIFSDLDLYATIIAINWADIFDPRDTFYVDFNGTNREIRNTQFGAMRVKDGIVDYFERKRFARPIVDKDRPDIRIHVYLDREKLIVSLDLSGEALHMRGYREDTGKAPLRETLAAIIVLRSGWQKGTPLVDPMCGSGTLLIEAAQMQAGIVPQLQRKYWGFNAWKGHQQAIWQQVLEEAHSQKNTQIDPLFYGFDLDHRVLAKAKQNAQNAGVAHLIHWQQADIAALKNPCLDQKGTLVSNPPYGERLGTTPALIALYSVFGQRLKQQFAGWNVSIFSGEPSLLNCLRLRSTRQFKAKNGPLDCLQKNYQIAEYAIHNQHISESSVAQNTQVAPDFANRLTKNIKKIEKWAKQQQLDAYRLYDADLPEYNFAVDRYSDHIVIQEYAAPKSIEQNKARQRLLDAVTATLHVTGIETNKLVLKVRQKQKGTNQYEKLANKGEYFYVNEYGAKLWVNLTDYLDTGIFLDHRLTRKMVGQMAKGKTFLNLFAYTGSATIHAALHGAKATTSVDMSNTYLNWAEQNLELNGLKSRNHRLFQADCLQWLAECRERFELIFVDPPTFSNSKRMEDSWDVQRDHIKLMTQLKRILTSDGMIVFSNNKRGFKMDFNGLTALGLVAENISYKTLPLDFERDPHIHNCWIIRHIEN.

The 112-residue stretch at G46–L157 folds into the THUMP domain.

It belongs to the methyltransferase superfamily. RlmKL family.

The protein localises to the cytoplasm. It catalyses the reaction guanosine(2445) in 23S rRNA + S-adenosyl-L-methionine = N(2)-methylguanosine(2445) in 23S rRNA + S-adenosyl-L-homocysteine + H(+). It carries out the reaction guanosine(2069) in 23S rRNA + S-adenosyl-L-methionine = N(2)-methylguanosine(2069) in 23S rRNA + S-adenosyl-L-homocysteine + H(+). Functionally, specifically methylates the guanine in position 2445 (m2G2445) and the guanine in position 2069 (m7G2069) of 23S rRNA. This chain is Ribosomal RNA large subunit methyltransferase K/L, found in Haemophilus ducreyi (strain 35000HP / ATCC 700724).